We begin with the raw amino-acid sequence, 75 residues long: RNA-binding protein KhpA (75 aa).

Residues 29-75 (SIILELKVSPEDMGKVIGKQGRIAKAIRTVVKAAAIKENKKVVVEII) form the KH domain.

The protein belongs to the KhpA RNA-binding protein family. As to quaternary structure, forms a complex with KhpB.

Its subcellular location is the cytoplasm. In terms of biological role, a probable RNA chaperone. Forms a complex with KhpB which binds to cellular RNA and controls its expression. Plays a role in peptidoglycan (PG) homeostasis and cell length regulation. In Clostridium perfringens (strain 13 / Type A), this protein is RNA-binding protein KhpA.